We begin with the raw amino-acid sequence, 1102 residues long: PAN2-PAN3 deadenylation complex catalytic subunit PAN2 (1102 aa).

WD repeat units lie at residues 20–59 (DYPR…RYTA), 104–144 (DEME…IVKQ), and 269–308 (NVMS…HFTD). The tract at residues 308–445 (DMAIPIEMPK…STDELESLKP (138 aa)) is linker. The disordered stretch occupies residues 423–442 (AVPDPKVEQVPESSTDELES). A USP domain is found at 446 to 833 (EAPPIYRNLE…LPAVLLFQVK (388 aa)). Residues 881-1054 (VGLDTEFVSL…EDARTALKLY (174 aa)) form the Exonuclease domain. A divalent metal cation contacts are provided by Asp-884, Glu-886, Asp-993, and Asp-1046.

The protein belongs to the peptidase C19 family. PAN2 subfamily. Forms a heterotrimer with an asymmetric homodimer of the regulatory subunit PAN3 to form the poly(A)-nuclease (PAN) deadenylation complex. A divalent metal cation serves as cofactor.

The protein localises to the cytoplasm. The catalysed reaction is Exonucleolytic cleavage of poly(A) to 5'-AMP.. With respect to regulation, positively regulated by the regulatory subunit PAN3. In terms of biological role, catalytic subunit of the poly(A)-nuclease (PAN) deadenylation complex, one of two cytoplasmic mRNA deadenylases involved in mRNA turnover. PAN specifically shortens poly(A) tails of RNA and the activity is stimulated by poly(A)-binding protein PAB1. PAN deadenylation is followed by rapid degradation of the shortened mRNA tails by the CCR4-NOT complex. Deadenylated mRNAs are then degraded by two alternative mechanisms, namely exosome-mediated 3'-5' exonucleolytic degradation, or deadenylation-dependent mRNA decaping and subsequent 5'-3' exonucleolytic degradation by XRN1. May also be involved in post-transcriptional maturation of mRNA poly(A) tails. This chain is PAN2-PAN3 deadenylation complex catalytic subunit PAN2, found in Chaetomium globosum (strain ATCC 6205 / CBS 148.51 / DSM 1962 / NBRC 6347 / NRRL 1970) (Soil fungus).